The sequence spans 212 residues: Large ribosomal subunit protein uL3 (212 aa).

Over residues 136-155 the composition is skewed to polar residues; sequence THGNSLSHRSNGSIGQNQTP. The tract at residues 136 to 157 is disordered; that stretch reads THGNSLSHRSNGSIGQNQTPGR. Glutamine 153 carries the post-translational modification N5-methylglutamine.

The protein belongs to the universal ribosomal protein uL3 family. Part of the 50S ribosomal subunit. Forms a cluster with proteins L14 and L19. Post-translationally, methylated by PrmB.

Its function is as follows. One of the primary rRNA binding proteins, it binds directly near the 3'-end of the 23S rRNA, where it nucleates assembly of the 50S subunit. The chain is Large ribosomal subunit protein uL3 from Shewanella putrefaciens (strain CN-32 / ATCC BAA-453).